Here is a 235-residue protein sequence, read N- to C-terminus: Small capsomere-interacting protein (235 aa).

The disordered stretch occupies residues 104–235; that stretch reads PRIIRPQPPN…SGNASRSRRV (132 aa). A compositionally biased stretch (polar residues) spans 127–139; the sequence is PQKTQSADQSALQ. Over residues 158–188 the composition is skewed to low complexity; it reads TTSASVGQQQHVVSGSSGQQPQQGAQSSTVQ. Polar residues predominate over residues 220–235; that stretch reads LSHTGQSGNASRSRRV.

It belongs to the herpesviridae small capsomere-interacting protein family. In terms of assembly, interacts with the major capsid protein/MCP.

It localises to the virion. It is found in the host nucleus. In terms of biological role, participates in the assembly of the infectious particles by decorating the outer surface of the capsid shell and thus forming a layer between the capsid and the tegument. Complexes composed of the capsid protein VP5 and VP26 assemble together in the host cytoplasm and are translocated to the nucleus, where they accumulate and participate in capsid assembly. Its function is as follows. Participates in the assembly of the infectious particles by decorating the outer surface of the capsid shell and thus forming a layer between the capsid and the tegument. Complexes composed of the major capsid protein and small capsomere-interacting protein/SCP assemble together in the host cytoplasm and are translocated to the nucleus, where they accumulate and participate in capsid assembly. This is Small capsomere-interacting protein from Homo sapiens (Human).